The chain runs to 165 residues: Large ribosomal subunit protein uL10 (165 aa).

Belongs to the universal ribosomal protein uL10 family. Part of the ribosomal stalk of the 50S ribosomal subunit. The N-terminus interacts with L11 and the large rRNA to form the base of the stalk. The C-terminus forms an elongated spine to which L12 dimers bind in a sequential fashion forming a multimeric L10(L12)X complex.

Functionally, forms part of the ribosomal stalk, playing a central role in the interaction of the ribosome with GTP-bound translation factors. This chain is Large ribosomal subunit protein uL10, found in Yersinia pseudotuberculosis serotype IB (strain PB1/+).